The sequence spans 438 residues: UDP-N-acetylmuramoylalanine--D-glutamate ligase (438 aa).

ATP is bound at residue 115 to 121 (GSNGKST).

Belongs to the MurCDEF family.

Its subcellular location is the cytoplasm. It catalyses the reaction UDP-N-acetyl-alpha-D-muramoyl-L-alanine + D-glutamate + ATP = UDP-N-acetyl-alpha-D-muramoyl-L-alanyl-D-glutamate + ADP + phosphate + H(+). The protein operates within cell wall biogenesis; peptidoglycan biosynthesis. Functionally, cell wall formation. Catalyzes the addition of glutamate to the nucleotide precursor UDP-N-acetylmuramoyl-L-alanine (UMA). The chain is UDP-N-acetylmuramoylalanine--D-glutamate ligase from Vibrio atlanticus (strain LGP32) (Vibrio splendidus (strain Mel32)).